The sequence spans 262 residues: MSEFEKIVRDIVFDSPPEEISLVYDNLQVLSDGQSKQQIASIIQEFNEKHRVPAAKGEERYLVSEYNKSGSKYFDPVNKVLFAVDHITREASDIEEYTSEDATQVQSDLYDELSKYVSNFFPDTAVFNVFKIPESDQYAIIVVSNKKSLGDFWTGYWLSEYVYDVDGDTISGEVSVDAHYFEDGNVRFKSTASLESAQTDSPIVSIKQFENEFEKNLINKFQYMNETQFKGLRRRLPVTRAKINWGQGIGNYRLGRDAAQGA.

Belongs to the F-actin-capping protein alpha subunit family. In terms of assembly, heterodimer of an alpha and a beta subunit.

F-actin-capping proteins bind in a Ca(2+)-independent manner to the fast growing ends of actin filaments (barbed end) thereby blocking the exchange of subunits at these ends. Unlike other capping proteins (such as gelsolin and severin), these proteins do not sever actin filaments. In Kluyveromyces lactis (strain ATCC 8585 / CBS 2359 / DSM 70799 / NBRC 1267 / NRRL Y-1140 / WM37) (Yeast), this protein is F-actin-capping protein subunit alpha (CAP1).